A 249-amino-acid polypeptide reads, in one-letter code: Probable endopeptidase YafL (249 aa).

The signal sequence occupies residues 1 to 17 (MSLPSIPSFVLSGLLLI). A lipid anchor (N-palmitoyl cysteine) is attached at C18. C18 carries the S-diacylglycerol cysteine lipid modification. Positions 116-243 (HNITEVAIHR…DHFLGARRIL (128 aa)) constitute a NlpC/P60 domain. C147 acts as the Nucleophile in catalysis. Residue H202 is the Proton acceptor of the active site. E214 is an active-site residue.

It belongs to the peptidase C40 family.

The protein resides in the cell membrane. In Escherichia coli (strain K12), this protein is Probable endopeptidase YafL (yafL).